Here is a 1044-residue protein sequence, read N- to C-terminus: Multiple epidermal growth factor-like domains protein 11 (1044 aa).

The N-terminal stretch at 1–19 (MVLSLTGLIAFSFLQATLA) is a signal peptide. Residues 20 to 848 (LNPEDPNVCS…SPALGAERHS (829 aa)) lie on the Extracellular side of the membrane. The region spanning 24–101 (DPNVCSHWES…YYESGDFCIP (78 aa)) is the EMI domain. 14 disulfide bridges follow: C28–C89, C54–C63, C88–C99, C103–C118, C120–C129, C146–C154, C148–C161, C163–C172, C185–C197, C191–C204, C206–C215, C228–C240, C234–C247, and C249–C258. 9 EGF-like domains span residues 95–130 (SGDFCIPLCTEECVHGRCVSPDTCHCEPGWGGPDCS), 143–173 (SNRCQCQNGALCNPITGACVCAAGFRGWRCE), 181–216 (HGKGCQLPCQCRHGASCDPRAGECLCAPGYTGVYCE), 224–259 (HGAHCELRCPCQNGGTCHHITGECACPPGWTGAVCA), 267–302 (FGQNCSQDCPCHHGGQCDHVTGQCHCTAGYMGDRCQ), 310–345 (FGFQCSQHCDCHNGGQCSPTTGACECEPGYKGPRCQ), 399–434 (YGDGCQLPCTCQNGADCHSITGGCTCAPGFMGEVCA), 442–477 (YGPNCSSICSCNNGGTCSPVDGSCTCKEGWQGLDCT), and 490–520 (NESCTCANGAACSPIDGSCSCTPGWLGDTCE). The N-linked (GlcNAc...) asparagine glycan is linked to N270. Disulfide bonds link C271–C283, C277–C290, C292–C301, C314–C326, C320–C333, C335–C344, C403–C415, C409–C422, C424–C433, C446–C458, C452–C465, C467–C476, C493–C501, C495–C508, and C510–C519. The N-linked (GlcNAc...) asparagine glycan is linked to N531. EGF-like domains lie at 571-606 (WGPNCSVSCSCENGGSCSPEDGSCECAPGFRGPLCQ), 659-694 (FGQDCAQLCSCANNGTCSPIDGSCQCFPGWIGKDCS), 707-737 (FHACSCHNGASCSAEDGACHCTPGWTGLFCT), 750-780 (GRVCQCQNGASCDHISGKCTCRTGFTGQHCE), and 788-823 (FGYGCQQLCECMNNSTCDHVTGTCYCSPGFKGIRCD). Cystine bridges form between C575–C587, C581–C594, C596–C605, C663–C675, C669–C682, C684–C693, C710–C718, C712–C725, C727–C736, C753–C761, C755–C768, C770–C779, C792–C804, C798–C811, and C813–C822. The helical transmembrane segment at 849 to 869 (VGAVTGIMLLLFLIVVLLGLF) threads the bilayer. Residues 870-1044 (AWHRRRQKEK…ANGPSQDKQS (175 aa)) are Cytoplasmic-facing. Residues 1023 to 1044 (GHYDLLPVRQSPANGPSQDKQS) form a disordered region. The span at 1033–1044 (SPANGPSQDKQS) shows a compositional bias: polar residues.

It belongs to the MEGF family. Homomer. Does not interact with MEGF10.

It is found in the cell membrane. The protein resides in the basolateral cell membrane. In terms of biological role, may regulate the mosaic spacing of specific neuron subtypes in the retina through homotypic retinal neuron repulsion. Mosaics provide a mechanism to distribute each cell type evenly across the retina, ensuring that all parts of the visual field have access to a full set of processing elements. This Homo sapiens (Human) protein is Multiple epidermal growth factor-like domains protein 11 (MEGF11).